We begin with the raw amino-acid sequence, 728 residues long: Probable 3',5'-cyclic phosphodiesterase pde-5 (728 aa).

The region spanning 214-371 (SMDAVIIKVM…HHAKLYDKIR (158 aa)) is the GAF domain. The PDEase domain occupies 390 to 709 (CNADEVNKLK…KKWEELAEEQ (320 aa)). His465 (proton donor) is an active-site residue. The a divalent metal cation site is built by His469, His503, Asp504, and Asp614. Residues 691 to 728 (MRERCEYNAKKWEELAEEQRKKQEALAQQNGEANETQE) are a coiled coil. The disordered stretch occupies residues 708-728 (EQRKKQEALAQQNGEANETQE). The segment covering 716–728 (LAQQNGEANETQE) has biased composition (polar residues).

The protein belongs to the cyclic nucleotide phosphodiesterase family. A divalent metal cation is required as a cofactor.

The enzyme catalyses a nucleoside 3',5'-cyclic phosphate + H2O = a nucleoside 5'-phosphate + H(+). In terms of biological role, redundantly with pde-1, plays a role in the AFD thermosensory neurons to regulate microvilli receptive ending morphology, possibly by regulating cGMP levels. The chain is Probable 3',5'-cyclic phosphodiesterase pde-5 (pde-5) from Caenorhabditis elegans.